Here is a 402-residue protein sequence, read N- to C-terminus: Glutamate N-acetyltransferase (402 aa).

The substrate site is built by Thr-151, Lys-178, Thr-189, Glu-267, Asn-397, and Thr-402. Thr-189 functions as the Nucleophile in the catalytic mechanism.

It belongs to the ArgJ family. As to quaternary structure, heterotetramer of two alpha and two beta chains.

It is found in the cytoplasm. It catalyses the reaction N(2)-acetyl-L-ornithine + L-glutamate = N-acetyl-L-glutamate + L-ornithine. It participates in amino-acid biosynthesis; L-arginine biosynthesis; L-ornithine and N-acetyl-L-glutamate from L-glutamate and N(2)-acetyl-L-ornithine (cyclic): step 1/1. In terms of biological role, catalyzes the transfer of the acetyl group from N(2)-acetylornithine to glutamate, forming N-acetylglutamate and L-ornithine. The polypeptide is Glutamate N-acetyltransferase (Methanothermobacter thermautotrophicus (strain ATCC 29096 / DSM 1053 / JCM 10044 / NBRC 100330 / Delta H) (Methanobacterium thermoautotrophicum)).